A 2191-amino-acid polypeptide reads, in one-letter code: FRAS1-related extracellular matrix protein 1 (2191 aa).

A signal peptide spans 1–29 (MHSPGCTGPKAQWFLLLQLLLLHLDRVSA). Residues 205–207 (RGD) carry the Cell attachment site motif. 3 CSPG repeats span residues 300-394 (VPRA…MELE), 419-506 (APRV…FRIF), and 527-621 (PPFL…FVLW). Asn-341 carries an N-linked (GlcNAc...) asparagine glycan. N-linked (GlcNAc...) asparagine glycans are attached at residues Asn-566 and Asn-628. 3 CSPG repeats span residues 648-779 (KEAP…VSVS), 801-892 (QVPE…LEVT), and 912-1007 (EPPI…LVVS). Asn-1039 carries N-linked (GlcNAc...) asparagine glycosylation. CSPG repeat units lie at residues 1049–1151 (PPSI…VYAT), 1172–1273 (EAPD…IQLS), 1294–1391 (TPTL…FYLW), 1412–1504 (GDIV…FTIS), 1525–1614 (LPVL…FLAT), and 1650–1742 (HLHS…FQAM). Asn-1180 carries N-linked (GlcNAc...) asparagine glycosylation. Asn-1584 carries N-linked (GlcNAc...) asparagine glycosylation. Positions 1749 to 1848 (ATPQSLDLRW…DDEVFEVILN (100 aa)) constitute a Calx-beta domain. Positions 1874 to 1921 (HPSNSFNQSKHSTWGKGPWHPLPSGSSSLTTSGSPLLERPPPSFTSGD) are disordered. A compositionally biased stretch (polar residues) spans 1875-1885 (PSNSFNQSKHS). The segment covering 1895-1910 (LPSGSSSLTTSGSPLL) has biased composition (low complexity). One can recognise a C-type lectin domain in the interval 2072-2186 (HSGYCHILVT…CSKGKAHNFV (115 aa)). Cys-2163 and Cys-2177 are joined by a disulfide.

It belongs to the FRAS1 family. As to quaternary structure, interacts with FREM2. As to expression, expressed in epidermis and hair follicles. Expressed in many developing epidermal appendages, including the whisker and sensory vibrissae, cranial and trunk hair follicles, meibomian glands, teeth, footpads, eyelash primordia and invaginating mammary glands. Limb expression localizes to sheets of dermal cells on the apical and basal surfaces of the digits but, unlike FRAS1, is excluded from the apical ectodermal ridge. Usually expressed at higher level in dermal cells underlying the differentiating epithelial components, especially underlying the epidermis of the head, limbs, and eyelids. Expression in the eyelid dermis is apparent as early as 13 dpc. Postnatal expression in the skin is limited to the dermal papillae. In the kidney, it is expressed from 12.5 dpc in the mesenchyme surrounding the branching ureteric tree, with a strong expression in the more proximal regions of these tubules rather than at the proliferating and branching ends of the ureteric buds. In hair follicle, it is selectively expressed in the vibrissal hair primordia during development. Preferentially expressed in the whisker pad epithelia of 12.5 dpc embryos, in both the epithelial and mesenchymal cells of developing hair follicles. In the early stages of hair follicle development (i.e. stages 0-1), it is expressed in both hair placodes and dermal condensations. In stage 2, it is detected in dermal condensations and adjacent epithelia, but not in the upper region of the hair follicles. Expressed at the tip of developing hair follicles in the later stages (i.e. stages 3-5).

The protein resides in the secreted. It localises to the extracellular space. Its subcellular location is the extracellular matrix. The protein localises to the basement membrane. In terms of biological role, extracellular matrix protein that plays a role in epidermal differentiation and is required for epidermal adhesion during embryonic development. The protein is FRAS1-related extracellular matrix protein 1 (Frem1) of Mus musculus (Mouse).